The chain runs to 332 residues: 2,3-diketo-L-gulonate reductase (332 aa).

Catalysis depends on His44, which acts as the Proton donor. NAD(+) contacts are provided by residues 168 to 174, 224 to 225, and 304 to 306; these read ITMVDMS, WK, and GHE.

This sequence belongs to the LDH2/MDH2 oxidoreductase family. DlgD subfamily. In terms of assembly, homodimer.

It localises to the cytoplasm. The catalysed reaction is 3-dehydro-L-gulonate + NAD(+) = 2,3-dioxo-L-gulonate + NADH + H(+). It catalyses the reaction 3-dehydro-L-gulonate + NADP(+) = 2,3-dioxo-L-gulonate + NADPH + H(+). Its function is as follows. Catalyzes the reduction of 2,3-diketo-L-gulonate in the presence of NADH, to form 3-keto-L-gulonate. This is 2,3-diketo-L-gulonate reductase from Salmonella paratyphi A (strain ATCC 9150 / SARB42).